A 621-amino-acid chain; its full sequence is Chaperone protein DnaK (621 aa).

T202 bears the Phosphothreonine; by autocatalysis mark. The interval 596-621 (SQFAQAAKQNEEKKEEDKKDSEESKN) is disordered. Positions 604-621 (QNEEKKEEDKKDSEESKN) are enriched in basic and acidic residues.

It belongs to the heat shock protein 70 family.

Its function is as follows. Acts as a chaperone. In Malacoplasma penetrans (strain HF-2) (Mycoplasma penetrans), this protein is Chaperone protein DnaK.